The following is a 382-amino-acid chain: Homoserine O-acetyltransferase (382 aa).

The disordered stretch occupies residues 1–20 (MSTDQSPCPSATGAELLPPP). Positions 59–363 (NVVLVEHALT…RDGHDGFLTE (305 aa)) constitute an AB hydrolase-1 domain. The active-site Nucleophile is Ser164. Arg234 is a binding site for substrate. Catalysis depends on residues Asp327 and His357. Asp358 serves as a coordination point for substrate.

This sequence belongs to the AB hydrolase superfamily. MetX family. In terms of assembly, homodimer.

The protein localises to the cytoplasm. The catalysed reaction is L-homoserine + acetyl-CoA = O-acetyl-L-homoserine + CoA. It participates in amino-acid biosynthesis; L-methionine biosynthesis via de novo pathway; O-acetyl-L-homoserine from L-homoserine: step 1/1. Its function is as follows. Transfers an acetyl group from acetyl-CoA to L-homoserine, forming acetyl-L-homoserine. The polypeptide is Homoserine O-acetyltransferase (Nocardia farcinica (strain IFM 10152)).